The primary structure comprises 178 residues: Large ribosomal subunit protein uL6 (178 aa).

The protein belongs to the universal ribosomal protein uL6 family. As to quaternary structure, part of the 50S ribosomal subunit.

This protein binds to the 23S rRNA, and is important in its secondary structure. It is located near the subunit interface in the base of the L7/L12 stalk, and near the tRNA binding site of the peptidyltransferase center. The protein is Large ribosomal subunit protein uL6 of Levilactobacillus brevis (strain ATCC 367 / BCRC 12310 / CIP 105137 / JCM 1170 / LMG 11437 / NCIMB 947 / NCTC 947) (Lactobacillus brevis).